A 448-amino-acid chain; its full sequence is DNA primase DnaG (448 aa).

The Toprim domain occupies 186–260 (DSIIVVEGRN…EADFVARAPP (75 aa)). Residues Glu192, Asp234, and Asp236 each coordinate Mg(2+). Positions 318–340 (AEVIEEPPEQPPKNEEIREEQSQ) are disordered. Over residues 329-338 (PKNEEIREEQ) the composition is skewed to basic and acidic residues.

This sequence belongs to the archaeal DnaG primase family. Forms a ternary complex with MCM helicase and DNA. Component of the archaeal exosome complex. The cofactor is Mg(2+).

It catalyses the reaction ssDNA + n NTP = ssDNA/pppN(pN)n-1 hybrid + (n-1) diphosphate.. Its function is as follows. RNA polymerase that catalyzes the synthesis of short RNA molecules used as primers for DNA polymerase during DNA replication. Also part of the exosome, which is a complex involved in RNA degradation. Acts as a poly(A)-binding protein that enhances the interaction between heteromeric, adenine-rich transcripts and the exosome. This is DNA primase DnaG from Thermoplasma acidophilum (strain ATCC 25905 / DSM 1728 / JCM 9062 / NBRC 15155 / AMRC-C165).